The following is a 299-amino-acid chain: Diaminopimelate epimerase (299 aa).

The substrate site is built by N11 and N63. C72 (proton donor) is an active-site residue. Substrate-binding positions include 73–74 (GN), N211, and 229–230 (ER). C238 functions as the Proton acceptor in the catalytic mechanism. Residue 239–240 (GT) coordinates substrate.

Belongs to the diaminopimelate epimerase family. As to quaternary structure, homodimer.

It localises to the cytoplasm. The catalysed reaction is (2S,6S)-2,6-diaminopimelate = meso-2,6-diaminopimelate. It functions in the pathway amino-acid biosynthesis; L-lysine biosynthesis via DAP pathway; DL-2,6-diaminopimelate from LL-2,6-diaminopimelate: step 1/1. Catalyzes the stereoinversion of LL-2,6-diaminopimelate (L,L-DAP) to meso-diaminopimelate (meso-DAP), a precursor of L-lysine and an essential component of the bacterial peptidoglycan. This Natranaerobius thermophilus (strain ATCC BAA-1301 / DSM 18059 / JW/NM-WN-LF) protein is Diaminopimelate epimerase.